The sequence spans 492 residues: N-succinylglutamate 5-semialdehyde dehydrogenase (492 aa).

Residue 220–225 (GSASTG) coordinates NAD(+). Active-site residues include E243 and C277.

Belongs to the aldehyde dehydrogenase family. AstD subfamily.

It catalyses the reaction N-succinyl-L-glutamate 5-semialdehyde + NAD(+) + H2O = N-succinyl-L-glutamate + NADH + 2 H(+). Its pathway is amino-acid degradation; L-arginine degradation via AST pathway; L-glutamate and succinate from L-arginine: step 4/5. Catalyzes the NAD-dependent reduction of succinylglutamate semialdehyde into succinylglutamate. The protein is N-succinylglutamate 5-semialdehyde dehydrogenase of Salmonella agona (strain SL483).